We begin with the raw amino-acid sequence, 236 residues long: Small ribosomal subunit protein mS41 (236 aa).

The protein belongs to the mitochondrion-specific ribosomal protein mS41 family. In terms of assembly, component of the mitochondrial small ribosomal subunit (mt-SSU). Mature N.crassa 74S mitochondrial ribosomes consist of a small (37S) and a large (54S) subunit. The 37S small subunit contains a 16S ribosomal RNA (16S mt-rRNA) and 32 different proteins. The 54S large subunit contains a 23S rRNA (23S mt-rRNA) and 42 different proteins.

It is found in the mitochondrion. Component of the mitochondrial ribosome (mitoribosome), a dedicated translation machinery responsible for the synthesis of mitochondrial genome-encoded proteins, including at least some of the essential transmembrane subunits of the mitochondrial respiratory chain. The mitoribosomes are attached to the mitochondrial inner membrane and translation products are cotranslationally integrated into the membrane. This is Small ribosomal subunit protein mS41 (fyv4) from Neurospora crassa (strain ATCC 24698 / 74-OR23-1A / CBS 708.71 / DSM 1257 / FGSC 987).